The chain runs to 308 residues: Transcription initiation factor IIB (308 aa).

2 tandem repeats follow at residues 124-207 (NELE…LREL) and 218-299 (DYVT…ELTQ).

It belongs to the TFIIB family.

Stabilizes TBP binding to an archaeal box-A promoter. Also responsible for recruiting RNA polymerase II to the pre-initiation complex (DNA-TBP-TFIIB). The chain is Transcription initiation factor IIB from Sulfurisphaera tokodaii (strain DSM 16993 / JCM 10545 / NBRC 100140 / 7) (Sulfolobus tokodaii).